We begin with the raw amino-acid sequence, 153 residues long: Peptide methionine sulfoxide reductase B6 (153 aa).

Residues 28–149 (NEEWRTVLSP…NSVALKFSSA (122 aa)) form the MsrB domain. Residues Cys-67, Cys-70, Cys-113, and Cys-116 each coordinate Zn(2+). Cys-85 and Cys-138 are disulfide-bonded. Cys-138 (nucleophile) is an active-site residue.

Belongs to the MsrB Met sulfoxide reductase family. The cofactor is Zn(2+).

Its subcellular location is the cytoplasm. The protein localises to the cytosol. It carries out the reaction L-methionyl-[protein] + [thioredoxin]-disulfide + H2O = L-methionyl-(R)-S-oxide-[protein] + [thioredoxin]-dithiol. In terms of biological role, catalyzes the reduction of methionine sulfoxide (MetSO) to methionine in proteins. Plays a protective role against oxidative stress by restoring activity to proteins that have been inactivated by methionine oxidation. MSRB family specifically reduces the MetSO R-enantiomer. The polypeptide is Peptide methionine sulfoxide reductase B6 (MSRB6) (Arabidopsis thaliana (Mouse-ear cress)).